Consider the following 355-residue polypeptide: Inositol-tetrakisphosphate 1-kinase 4 (355 aa).

Lys-65 provides a ligand contact to 1D-myo-inositol 1,3,4-trisphosphate. ATP contacts are provided by Arg-101 and Lys-146. The 212-residue stretch at 107 to 318 (VVSGLRTPVS…FFLEMLRGTR (212 aa)) folds into the ATP-grasp domain. His-157 and Lys-190 together coordinate 1D-myo-inositol 1,3,4-trisphosphate. ATP contacts are provided by residues 179 to 190 (QEFVNHGGVLFK) and Ser-205. The disordered stretch occupies residues 225-248 (FANISNQPLPPPDDDGGAADDDTP). The span at 236-247 (PDDDGGAADDDT) shows a compositional bias: acidic residues. Asp-272, Asp-289, and Asn-291 together coordinate Mg(2+). A 1D-myo-inositol 1,3,4-trisphosphate-binding site is contributed by Asn-291.

It belongs to the ITPK1 family. Monomer. Mg(2+) is required as a cofactor.

It catalyses the reaction 1D-myo-inositol 3,4,5,6-tetrakisphosphate + ATP = 1D-myo-inositol 1,3,4,5,6-pentakisphosphate + ADP + H(+). The enzyme catalyses 1D-myo-inositol 1,3,4-trisphosphate + ATP = 1D-myo-inositol 1,3,4,5-tetrakisphosphate + ADP + H(+). It carries out the reaction 1D-myo-inositol 1,3,4-trisphosphate + ATP = 1D-myo-inositol 1,3,4,6-tetrakisphosphate + ADP + H(+). In terms of biological role, kinase that can phosphorylate various inositol polyphosphate such as Ins(3,4,5,6)P4 or Ins(1,3,4)P3 and participates in phytic acid biosynthesis in developing seeds. Phytic acid is the primary storage form of phosphorus in cereal grains and other plant seeds. This is Inositol-tetrakisphosphate 1-kinase 4 (ITPK4) from Oryza sativa subsp. indica (Rice).